A 154-amino-acid chain; its full sequence is UPF0127 protein TSIB_1463 (154 aa).

The protein belongs to the UPF0127 family.

The protein is UPF0127 protein TSIB_1463 of Thermococcus sibiricus (strain DSM 12597 / MM 739).